Here is an 81-residue protein sequence, read N- to C-terminus: Photosystem I iron-sulfur center (81 aa).

4Fe-4S ferredoxin-type domains are found at residues 2–31 (AHSV…MIPW) and 39–68 (IASA…VRVY). 8 residues coordinate [4Fe-4S] cluster: Cys-11, Cys-14, Cys-17, Cys-21, Cys-48, Cys-51, Cys-54, and Cys-58.

The eukaryotic PSI reaction center is composed of at least 11 subunits. Requires [4Fe-4S] cluster as cofactor.

The protein localises to the plastid. Its subcellular location is the chloroplast thylakoid membrane. It catalyses the reaction reduced [plastocyanin] + hnu + oxidized [2Fe-2S]-[ferredoxin] = oxidized [plastocyanin] + reduced [2Fe-2S]-[ferredoxin]. Apoprotein for the two 4Fe-4S centers FA and FB of photosystem I (PSI); essential for photochemical activity. FB is the terminal electron acceptor of PSI, donating electrons to ferredoxin. The C-terminus interacts with PsaA/B/D and helps assemble the protein into the PSI complex. Required for binding of PsaD and PsaE to PSI. PSI is a plastocyanin-ferredoxin oxidoreductase, converting photonic excitation into a charge separation, which transfers an electron from the donor P700 chlorophyll pair to the spectroscopically characterized acceptors A0, A1, FX, FA and FB in turn. This chain is Photosystem I iron-sulfur center, found in Staurastrum punctulatum (Green alga).